The chain runs to 420 residues: Protein translocase subunit SecY (420 aa).

10 consecutive transmembrane segments (helical) span residues 9 to 29 (ILIT…PIPG), 61 to 81 (LSII…MELL), 104 to 124 (IVRY…SVGL), 141 to 161 (VFMI…MWIG), 173 to 193 (ISLI…SGTF), 203 to 223 (ILML…IIYV), 257 to 277 (LSGV…STIL), 300 to 320 (YNIL…SIVF), 355 to 375 (KLTL…WILV), and 377 to 397 (AMGV…QVAI).

The protein belongs to the SecY/SEC61-alpha family. Component of the Sec protein translocase complex. Heterotrimer consisting of SecY, SecE and SecG subunits. The heterotrimers can form oligomers, although 1 heterotrimer is thought to be able to translocate proteins. Interacts with the ribosome. Interacts with SecDF, and other proteins may be involved. Interacts with SecA.

It localises to the cell inner membrane. In terms of biological role, the central subunit of the protein translocation channel SecYEG. Consists of two halves formed by TMs 1-5 and 6-10. These two domains form a lateral gate at the front which open onto the bilayer between TMs 2 and 7, and are clamped together by SecE at the back. The channel is closed by both a pore ring composed of hydrophobic SecY resides and a short helix (helix 2A) on the extracellular side of the membrane which forms a plug. The plug probably moves laterally to allow the channel to open. The ring and the pore may move independently. In Helicobacter pylori (strain ATCC 700392 / 26695) (Campylobacter pylori), this protein is Protein translocase subunit SecY.